Here is a 355-residue protein sequence, read N- to C-terminus: MFEAVTPLLDEHAELERRLADPAVHADAALARTLGRRYAELGAVVVAHAAWRAAADDAEAARELAAEDAAFAAELPALQRAAEEAGEKLRRLLLPRDPDDSRDVILEIKAGEGGEESALFAGDLLRMYLRYAERHGWVTEVLDANPSDLGGYKDVSVAVKTRGAAAEGVWHRLKYEGGVHRVQRVPVTESQGRVHTSAVGVLVVPEAEEVEVAVDPNDLRVDVFRSSGPGGQSVNTTDSAVRITHLPTGVVATCQNEKSQLQNREQAMRILRARLHALAQEAADAQASAARRSQVRTVDRSERVRTYNYGENRIADHRTGFKAYNLDTVLDGDLDPVIQSAIDADEAAQLAATSV.

Glutamine 232 carries the post-translational modification N5-methylglutamine.

The protein belongs to the prokaryotic/mitochondrial release factor family. Post-translationally, methylated by PrmC. Methylation increases the termination efficiency of RF1.

It is found in the cytoplasm. Peptide chain release factor 1 directs the termination of translation in response to the peptide chain termination codons UAG and UAA. This is Peptide chain release factor 1 from Kineococcus radiotolerans (strain ATCC BAA-149 / DSM 14245 / SRS30216).